The sequence spans 237 residues: Uridylate kinase (237 aa).

An ATP-binding site is contributed by 9-12 (KLSG). Positions 17–22 (GTQGYG) are involved in allosteric activation by GTP. Position 51 (Gly-51) interacts with UMP. Gly-52 and Arg-56 together coordinate ATP. Residues Asp-71 and 132 to 139 (CGNPFFTT) each bind UMP. Residues Thr-159, Tyr-165, and Asp-168 each contribute to the ATP site.

It belongs to the UMP kinase family. Homohexamer.

Its subcellular location is the cytoplasm. It carries out the reaction UMP + ATP = UDP + ADP. It functions in the pathway pyrimidine metabolism; CTP biosynthesis via de novo pathway; UDP from UMP (UMPK route): step 1/1. Its activity is regulated as follows. Allosterically activated by GTP. Inhibited by UTP. In terms of biological role, catalyzes the reversible phosphorylation of UMP to UDP. This Parasynechococcus marenigrum (strain WH8102) protein is Uridylate kinase.